We begin with the raw amino-acid sequence, 297 residues long: Large ribosomal subunit protein uL18 (297 aa).

G2 bears the N-acetylglycine mark. An N6-acetyllysine mark is found at K5 and K48. S185 is modified (phosphoserine). K220 is modified (N6-acetyllysine; alternate). A Glycyl lysine isopeptide (Lys-Gly) (interchain with G-Cter in SUMO1); alternate cross-link involves residue K220. K220 participates in a covalent cross-link: Glycyl lysine isopeptide (Lys-Gly) (interchain with G-Cter in SUMO2); alternate. A Phosphothreonine modification is found at T232. A disordered region spans residues 253-297 (YEKKPKREVKKKRWNRPKMSLAQKKDRVAQKKASFLRAQERAAES). Residues 258–268 (KREVKKKRWNR) are compositionally biased toward basic residues. S272 carries the post-translational modification Phosphoserine.

It belongs to the universal ribosomal protein uL18 family. As to quaternary structure, component of the large ribosomal subunit (LSU). Part of the 5S RNP complex, which is a LSU subcomplex composed of the 5S RNA, RPL5 and RPL11. Component of a hexameric 5S RNP precursor complex, composed of 5S RNA, RRS1, RPF2/BXDC1, RPL5, RPL11 and HEATR3; this complex acts as a precursor for ribosome assembly. Interacts with NVL in an ATP-dependent manner. Interacts with RRP1B. Interacts with IPO5, IPO7 and KPNB1; these interactions may be involved in RPL5 nuclear import for the assembly of ribosomal subunits. Interacts with RRP1B.

It localises to the cytoplasm. Its subcellular location is the nucleus. It is found in the nucleolus. Its function is as follows. Component of the ribosome, a large ribonucleoprotein complex responsible for the synthesis of proteins in the cell. The small ribosomal subunit (SSU) binds messenger RNAs (mRNAs) and translates the encoded message by selecting cognate aminoacyl-transfer RNA (tRNA) molecules. The large subunit (LSU) contains the ribosomal catalytic site termed the peptidyl transferase center (PTC), which catalyzes the formation of peptide bonds, thereby polymerizing the amino acids delivered by tRNAs into a polypeptide chain. The nascent polypeptides leave the ribosome through a tunnel in the LSU and interact with protein factors that function in enzymatic processing, targeting, and the membrane insertion of nascent chains at the exit of the ribosomal tunnel. As part of the 5S RNP/5S ribonucleoprotein particle it is an essential component of the LSU, required for its formation and the maturation of rRNAs. It also couples ribosome biogenesis to p53/TP53 activation. As part of the 5S RNP it accumulates in the nucleoplasm and inhibits MDM2, when ribosome biogenesis is perturbed, mediating the stabilization and the activation of TP53. The chain is Large ribosomal subunit protein uL18 (Rpl5) from Rattus norvegicus (Rat).